Consider the following 418-residue polypeptide: Glutamyl-tRNA reductase (418 aa).

Residues 49 to 52, serine 108, 113 to 115, and glutamine 119 contribute to the substrate site; these read TCNR and EPQ. Cysteine 50 functions as the Nucleophile in the catalytic mechanism. Position 188–193 (188–193) interacts with NADP(+); that stretch reads GAGETI.

The protein belongs to the glutamyl-tRNA reductase family. As to quaternary structure, homodimer.

The enzyme catalyses (S)-4-amino-5-oxopentanoate + tRNA(Glu) + NADP(+) = L-glutamyl-tRNA(Glu) + NADPH + H(+). Its pathway is porphyrin-containing compound metabolism; protoporphyrin-IX biosynthesis; 5-aminolevulinate from L-glutamyl-tRNA(Glu): step 1/2. Its function is as follows. Catalyzes the NADPH-dependent reduction of glutamyl-tRNA(Glu) to glutamate 1-semialdehyde (GSA). This is Glutamyl-tRNA reductase from Aliivibrio fischeri (strain MJ11) (Vibrio fischeri).